We begin with the raw amino-acid sequence, 750 residues long: Photosystem I P700 chlorophyll a apoprotein A1 (750 aa).

8 helical membrane passes run V70 to A93, L156 to H179, L195 to L219, I291 to Y309, W346 to Y369, L385 to V411, A433 to H455, and F531 to L549. 2 residues coordinate [4Fe-4S] cluster: C573 and C582. The next 2 membrane-spanning stretches (helical) occupy residues H589–W610 and L664–F686. H675 lines the chlorophyll a' pocket. Positions 683 and 691 each coordinate chlorophyll a. A phylloquinone-binding site is contributed by W692. A helical transmembrane segment spans residues A724–A744.

This sequence belongs to the PsaA/PsaB family. The PsaA/B heterodimer binds the P700 chlorophyll special pair and subsequent electron acceptors. PSI consists of a core antenna complex that captures photons, and an electron transfer chain that converts photonic excitation into a charge separation. The eukaryotic PSI reaction center is composed of at least 11 subunits. Requires P700 is a chlorophyll a/chlorophyll a' dimer, A0 is one or more chlorophyll a, A1 is one or both phylloquinones and FX is a shared 4Fe-4S iron-sulfur center. as cofactor.

Its subcellular location is the plastid. It localises to the chloroplast thylakoid membrane. The catalysed reaction is reduced [plastocyanin] + hnu + oxidized [2Fe-2S]-[ferredoxin] = oxidized [plastocyanin] + reduced [2Fe-2S]-[ferredoxin]. Its function is as follows. PsaA and PsaB bind P700, the primary electron donor of photosystem I (PSI), as well as the electron acceptors A0, A1 and FX. PSI is a plastocyanin-ferredoxin oxidoreductase, converting photonic excitation into a charge separation, which transfers an electron from the donor P700 chlorophyll pair to the spectroscopically characterized acceptors A0, A1, FX, FA and FB in turn. Oxidized P700 is reduced on the lumenal side of the thylakoid membrane by plastocyanin. In Coffea arabica (Arabian coffee), this protein is Photosystem I P700 chlorophyll a apoprotein A1.